The sequence spans 594 residues: MWSRRIPLFIFGVLVLILSVAAEDVVWRWSCDNGKCVKLKNDPRSSEPALSLEACKMFCNEYGLLWPRPTGEADLGNFLSKINLNSIEVKILKKGATDDLMEAAAKRFKEQVSLAIPRGSTPKLTGKAVDVYLVNENPNEKAFSLEMDESYGLRVSPSGADRVNATITANSFFGMRHGLETLSQLFVFDDIRDHLLMVRDVNISDKPVYPYRGILLDTARNYYSIESIKRTIEAMAAVKLNTFHWHITDSQSFPFVTTKRPNLYKFGALSPQKVYTKAAIREVVRFGLERGVRVLPEFDAPAHVGEGWQDTDLTVCFKAEPWKSYCVEPPCGQLNPTKDELYQYLEDIYSDMAEVFDTTDIFHMGGDEVSEACWNSSDSIQNFMMQNRWDLDKESFLKLWNYFQQKAQDKAYKAFGKKLPLILWTSTLTNYKHIDDYLNKDDYIIQVWTTGVDPQIKGLLEKGYRLIMSNYDALYFDCGYGAWVGAGNNWCSPYIGWQKVYDNSPAVIALEHRDQVLGGEAALWSEQSDTSTLDGRLWPRAAALAERLWAEPATSWQDAEYRMLHIRERLVRMGIQAESLQPEWCYQNEGYCYS.

The first 22 residues, 1–22 (MWSRRIPLFIFGVLVLILSVAA), serve as a signal peptide directing secretion. 2 cysteine pairs are disulfide-bonded: Cys-31/Cys-59 and Cys-36/Cys-55. An N-linked (GlcNAc...) asparagine glycan is attached at Asn-164. Residues Asp-249 and His-303 each act as charge relay system in the active site. Disulfide bonds link Cys-316/Cys-373 and Cys-326/Cys-331. Glu-368 functions as the Charge relay system in the catalytic mechanism. N-linked (GlcNAc...) asparagine glycosylation occurs at Asn-375. Cystine bridges form between Cys-478–Cys-491 and Cys-585–Cys-592.

It belongs to the glycosyl hydrolase 20 family. In terms of assembly, homodimer.

The catalysed reaction is Hydrolysis of terminal non-reducing N-acetyl-D-hexosamine residues in N-acetyl-beta-D-hexosaminides.. Inhibited by O-(2-acetamido-2-deoxy-D-glucopyransylidene)-amino-N-phenylcarbamate (PUGNAc). Inhibited by thiabendazole (TMG)-chitotriomycin. Inhibited by 6-(dimethylamino)-2-(2-(((5-methyl-1,3,4-thiadiazol-2-yl)methyl)amino)ethyl)- 1H-benzo[de]isoquinoline-1,3(2H)-dione (Q2), a synthesized non-carbohydrate unsymmetrical dyad of naphthalimide and thiadiazole having a dimethylamino group at C4 of the naphthalimide. Inhibited poorly by N-acetyl-glucosamine (NAG)-thiazoline (NGT), but when the thiazoline ring of NGT is replaced by a bulky substituent such as in compound 1,2-dideoxy-2'-methylamino-alpha-D-glucopyranoso-[2,1-d]-Delta2'-thiazoline (NMAGT), the inhibition constant Ki is lowered 600-fold compared to that of NGT. Inhibited by berberine, berberine analogs thalifendine and palmatine, and berberine derivative SYSU-1, but not by berberine analog tetrahydroberberine. Hydrolyzes one beta-GlcNAc unit at a time from the non-reducing ends of substrates, with a preference for shorter substrates. The 2-acetamido group and the beta-glycoside bond linkage in the substrate are required for its activity. Active with p-nitrophenyl (pNP)-beta-GlcNAc, pNP-beta-GalNAc and chitooligosaccharides (degree of polymerization from 2 to 6), but not with the complex N-glycan substrate (GlcNAcbeta-1,2Manalpha-1,6)(GlcNAcbeta-1,2Manalpha-1,3)Manbeta-1,4GlcNAcbeta-1,4GlcNAc-PA (GnGn-PA), pNP-alpha-GlcNAc or with the long polymer colloidal chitin. Involved in chitin catabolism. Involved in the degradation of old cuticle during the pupation stage. This is Chitooligosaccharidolytic beta-N-acetylglucosaminidase from Ostrinia furnacalis (Asian corn borer).